A 177-amino-acid chain; its full sequence is MSSAPNASALMKIGQLKKPYGIKGWLWVFSETDDRTAIFDIKPWWMKTATGMKPLTVKAWREQGTGIVAQFEQIPDRNVAETMNGVTLWVEQDILPEPAEDEYYWSDLVSLRVMNEQDEYLGDITEMFETGAHAIMRVAATTDSLDKEERLIPWHKQTVVKVDLTEKTVLVAWPSDY.

Residues 100 to 177 (EDEYYWSDLV…TVLVAWPSDY (78 aa)) form the PRC barrel domain.

The protein belongs to the RimM family. In terms of assembly, binds ribosomal protein uS19.

It localises to the cytoplasm. An accessory protein needed during the final step in the assembly of 30S ribosomal subunit, possibly for assembly of the head region. Essential for efficient processing of 16S rRNA. May be needed both before and after RbfA during the maturation of 16S rRNA. It has affinity for free ribosomal 30S subunits but not for 70S ribosomes. This Psychrobacter cryohalolentis (strain ATCC BAA-1226 / DSM 17306 / VKM B-2378 / K5) protein is Ribosome maturation factor RimM.